Reading from the N-terminus, the 435-residue chain is MEVYIPIIYWKSCSEKEKREILFRPVVNDNSQIKEVVKEIITNVKNSGDKALYDYTKTFDKIRLESIQVSYGEIVDSDSFVNEEIQKSISVAKNNIKIFHEKQTHNVVNIEIQPGVFCRQIIRPIQSVGLYIPGGCAPLVSTVLMLAIPAKIVGCKNIILCSPPPITKEILYASKICGIHNIFQVGGAQAIAAMAFGTKTIPKVNKIFGPGNVYVTEAKLQINALLNDLSIDMLAGPSEILIIADFKANACIIASDFLSQMEHGIYSQAILVTPSYDLACNVIFEINIQLKNLSRKKVINKSLKYSRIIVTKTLLECFEISNLYAPEHLIIQCENSNRLLVYVINAGSIFLGRWSAVASGDYVTGTNHVLPTYGSAIVNSGLTVMDFQKIISVQKLDQQGLIDVSSSIISLSEVERMDAHTNSIKQRLIALQDVK.

Residues Tyr-131, Gln-189, and Asn-212 each coordinate NAD(+). Ser-238, Gln-260, and His-263 together coordinate substrate. Zn(2+) is bound by residues Gln-260 and His-263. Catalysis depends on proton acceptor residues Glu-327 and His-328. Substrate is bound by residues His-328, Asp-361, Glu-415, and His-420. Residue Asp-361 coordinates Zn(2+). Position 420 (His-420) interacts with Zn(2+).

Belongs to the histidinol dehydrogenase family. As to quaternary structure, homodimer. Zn(2+) is required as a cofactor.

It carries out the reaction L-histidinol + 2 NAD(+) + H2O = L-histidine + 2 NADH + 3 H(+). Its pathway is amino-acid biosynthesis; L-histidine biosynthesis; L-histidine from 5-phospho-alpha-D-ribose 1-diphosphate: step 9/9. Its function is as follows. Catalyzes the sequential NAD-dependent oxidations of L-histidinol to L-histidinaldehyde and then to L-histidine. This is Histidinol dehydrogenase from Buchnera aphidicola subsp. Baizongia pistaciae (strain Bp).